The sequence spans 270 residues: Shikimate dehydrogenase (NADP(+)) (270 aa).

Residues 14–16 (SLS) and Thr-61 each bind shikimate. Residue Lys-65 is the Proton acceptor of the active site. Asp-77 contributes to the NADP(+) binding site. Positions 86 and 101 each coordinate shikimate. Residues 125-129 (GNGGA) and Ile-210 contribute to the NADP(+) site. Tyr-212 is a binding site for shikimate. An NADP(+)-binding site is contributed by Gly-233.

It belongs to the shikimate dehydrogenase family. In terms of assembly, homodimer.

It carries out the reaction shikimate + NADP(+) = 3-dehydroshikimate + NADPH + H(+). Its pathway is metabolic intermediate biosynthesis; chorismate biosynthesis; chorismate from D-erythrose 4-phosphate and phosphoenolpyruvate: step 4/7. Involved in the biosynthesis of the chorismate, which leads to the biosynthesis of aromatic amino acids. Catalyzes the reversible NADPH linked reduction of 3-dehydroshikimate (DHSA) to yield shikimate (SA). This chain is Shikimate dehydrogenase (NADP(+)), found in Clostridium beijerinckii (strain ATCC 51743 / NCIMB 8052) (Clostridium acetobutylicum).